An 86-amino-acid chain; its full sequence is Acyl carrier protein (86 aa).

In terms of domain architecture, Carrier spans Ala-2–Gly-82. Ser-37 is subject to O-(pantetheine 4'-phosphoryl)serine.

The protein belongs to the acyl carrier protein (ACP) family. In terms of processing, 4'-phosphopantetheine is transferred from CoA to a specific serine of apo-ACP by AcpS. This modification is essential for activity because fatty acids are bound in thioester linkage to the sulfhydryl of the prosthetic group.

It localises to the cytoplasm. The protein operates within lipid metabolism; fatty acid biosynthesis. In terms of biological role, carrier of the growing fatty acid chain in fatty acid biosynthesis. The sequence is that of Acyl carrier protein from Dehalococcoides mccartyi (strain ATCC BAA-2266 / KCTC 15142 / 195) (Dehalococcoides ethenogenes (strain 195)).